Reading from the N-terminus, the 519-residue chain is Ribonuclease Y (519 aa).

The helical transmembrane segment at 6-26 (VPFYLLIFLVGIGLGVLTFWA) threads the bilayer. A KH domain is found at 209 to 272 (TVCTVTIPNE…HIAKMALTEL (64 aa)). Positions 335–428 (VLDHSLEVSH…CSAADAISAS (94 aa)) constitute an HD domain.

This sequence belongs to the RNase Y family.

It localises to the cell membrane. Its function is as follows. Endoribonuclease that initiates mRNA decay. The protein is Ribonuclease Y of Protochlamydia amoebophila (strain UWE25).